Consider the following 252-residue polypeptide: Tumor necrosis factor ligand superfamily member 15 (252 aa).

Residues 1–39 lie on the Cytoplasmic side of the membrane; the sequence is MAEELGLGFGEAVPVEMLPEGCRHRREARTGLAARSKAC. Residues 40-60 traverse the membrane as a helical; Signal-anchor for type II membrane protein segment; it reads LALTCCLLSFPILAGLSTLLM. The Extracellular portion of the chain corresponds to 61–252; it reads TGQLRIPGKD…DKTFFGAFLI (192 aa). A THD domain is found at 96–252; sequence PKAHLTIMRQ…DKTFFGAFLI (157 aa). N134 carries an N-linked (GlcNAc...) asparagine glycan. C163 and C203 are disulfide-bonded. N230 carries an N-linked (GlcNAc...) asparagine glycan.

Belongs to the tumor necrosis factor family. In terms of assembly, homotrimer.

The protein resides in the membrane. Functionally, receptor for TNFRSF25 and TNFRSF6B. Mediates activation of NF-kappa-B. Inhibits vascular endothelial growth and angiogenesis (in vitro). Promotes activation of caspases and apoptosis. Promotes splenocyte alloactivation. In Rattus norvegicus (Rat), this protein is Tumor necrosis factor ligand superfamily member 15 (Tnfsf15).